The primary structure comprises 516 residues: MALLLVSSSSSYALRVTIFLSFFFFLCNGFSYPTTSSLFNTHHHRHHLAKHNYKDALTKSILFFEGQRSGKLPSNQRMSWRRDSGLSDGSALHVDLVGGYYDAGDNIKFGFPMAFTTTMLSWSVIEFGGLMKSELQNAKIAIRWATDYLLKATSQPDTIYVQVGDANKDHSCWERPEDMDTVRSVFKVDKNIPGSDVAAETAAALAAAAIVFRKSDPSYSKVLLKRAISVFAFADKYRGTYSAGLKPDVCPFYCSYSGYQDELLWGAAWLQKATKNIKYLNYIKINGQILGAAEYDNTFGWDNKHAGARILLTKAFLVQNVKTLHEYKGHADNFICSVIPGAPFSSTQYTPGGLLFKMADANMQYVTSTSFLLLTYAKYLTSAKTVVHCGGSVYTPGRLRSIAKRQVDYLLGDNPLRMSYMVGYGPKFPRRIHHRGSSLPCVASHPAKIQCHQGFAIMNSQSPNPNFLVGAVVGGPDQHDRFPDERSDYEQSEPATYINSPLVGALAYFAHAYGQL.

An N-terminal signal peptide occupies residues 1–29 (MALLLVSSSSSYALRVTIFLSFFFFLCNG). Asp105 functions as the Nucleophile in the catalytic mechanism. Residues His433, Asp484, and Glu493 contribute to the active site.

It belongs to the glycosyl hydrolase 9 (cellulase E) family.

The protein localises to the secreted. It catalyses the reaction Endohydrolysis of (1-&gt;4)-beta-D-glucosidic linkages in cellulose, lichenin and cereal beta-D-glucans.. The sequence is that of Endoglucanase 17 from Arabidopsis thaliana (Mouse-ear cress).